Here is a 68-residue protein sequence, read N- to C-terminus: DNA-directed RNA polymerase subunit omega (68 aa).

Belongs to the RNA polymerase subunit omega family. As to quaternary structure, the RNAP catalytic core consists of 2 alpha, 1 beta, 1 beta' and 1 omega subunit. When a sigma factor is associated with the core the holoenzyme is formed, which can initiate transcription.

The catalysed reaction is RNA(n) + a ribonucleoside 5'-triphosphate = RNA(n+1) + diphosphate. Promotes RNA polymerase assembly. Latches the N- and C-terminal regions of the beta' subunit thereby facilitating its interaction with the beta and alpha subunits. In Chromobacterium violaceum (strain ATCC 12472 / DSM 30191 / JCM 1249 / CCUG 213 / NBRC 12614 / NCIMB 9131 / NCTC 9757 / MK), this protein is DNA-directed RNA polymerase subunit omega.